An 84-amino-acid polypeptide reads, in one-letter code: Sulfur carrier protein TusA (84 aa).

Cys-19 acts as the Cysteine persulfide intermediate in catalysis.

Belongs to the sulfur carrier protein TusA family. As to quaternary structure, interacts with IscS.

It localises to the cytoplasm. It participates in tRNA modification. Functionally, sulfur carrier protein involved in sulfur trafficking in the cell. Part of a sulfur-relay system required for 2-thiolation during synthesis of 2-thiouridine of the modified wobble base 5-methylaminomethyl-2-thiouridine (mnm(5)s(2)U) in tRNA. Interacts with IscS and stimulates its cysteine desulfurase activity. Accepts an activated sulfur from IscS, which is then transferred to TusD, and thus determines the direction of sulfur flow from IscS to 2-thiouridine formation. Also appears to be involved in sulfur transfer for the biosynthesis of molybdopterin. The protein is Sulfur carrier protein TusA of Yersinia pseudotuberculosis serotype O:1b (strain IP 31758).